Reading from the N-terminus, the 86-residue chain is Small ribosomal subunit protein bS18 (86 aa).

Belongs to the bacterial ribosomal protein bS18 family. Part of the 30S ribosomal subunit. Forms a tight heterodimer with protein bS6.

Binds as a heterodimer with protein bS6 to the central domain of the 16S rRNA, where it helps stabilize the platform of the 30S subunit. The polypeptide is Small ribosomal subunit protein bS18 (Campylobacter fetus subsp. fetus (strain 82-40)).